The primary structure comprises 38 residues: Photosystem II reaction center protein L (38 aa).

A helical transmembrane segment spans residues 17 to 37 (SLFIGLLLVLVLALLFSSYFF).

The protein belongs to the PsbL family. PSII is composed of 1 copy each of membrane proteins PsbA, PsbB, PsbC, PsbD, PsbE, PsbF, PsbH, PsbI, PsbJ, PsbK, PsbL, PsbM, PsbT, PsbX, PsbY, PsbZ, Psb30/Ycf12, peripheral proteins PsbO, CyanoQ (PsbQ), PsbU, PsbV and a large number of cofactors. It forms dimeric complexes.

It localises to the cellular thylakoid membrane. In terms of biological role, one of the components of the core complex of photosystem II (PSII). PSII is a light-driven water:plastoquinone oxidoreductase that uses light energy to abstract electrons from H(2)O, generating O(2) and a proton gradient subsequently used for ATP formation. It consists of a core antenna complex that captures photons, and an electron transfer chain that converts photonic excitation into a charge separation. This subunit is found at the monomer-monomer interface and is required for correct PSII assembly and/or dimerization. The polypeptide is Photosystem II reaction center protein L (Acaryochloris marina (strain MBIC 11017)).